The following is a 177-amino-acid chain: Crossover junction endodeoxyribonuclease RuvC (177 aa).

Active-site residues include Asp8, Glu72, and Asp144. Residues Asp8, Glu72, and Asp144 each coordinate Mg(2+).

This sequence belongs to the RuvC family. In terms of assembly, homodimer which binds Holliday junction (HJ) DNA. The HJ becomes 2-fold symmetrical on binding to RuvC with unstacked arms; it has a different conformation from HJ DNA in complex with RuvA. In the full resolvosome a probable DNA-RuvA(4)-RuvB(12)-RuvC(2) complex forms which resolves the HJ. Requires Mg(2+) as cofactor.

It localises to the cytoplasm. It catalyses the reaction Endonucleolytic cleavage at a junction such as a reciprocal single-stranded crossover between two homologous DNA duplexes (Holliday junction).. Functionally, the RuvA-RuvB-RuvC complex processes Holliday junction (HJ) DNA during genetic recombination and DNA repair. Endonuclease that resolves HJ intermediates. Cleaves cruciform DNA by making single-stranded nicks across the HJ at symmetrical positions within the homologous arms, yielding a 5'-phosphate and a 3'-hydroxyl group; requires a central core of homology in the junction. The consensus cleavage sequence is 5'-(A/T)TT(C/G)-3'. Cleavage occurs on the 3'-side of the TT dinucleotide at the point of strand exchange. HJ branch migration catalyzed by RuvA-RuvB allows RuvC to scan DNA until it finds its consensus sequence, where it cleaves and resolves the cruciform DNA. This is Crossover junction endodeoxyribonuclease RuvC from Teredinibacter turnerae (strain ATCC 39867 / T7901).